The following is an 88-amino-acid chain: Small ribosomal subunit protein uS15 (88 aa).

The protein belongs to the universal ribosomal protein uS15 family. As to quaternary structure, part of the 30S ribosomal subunit. Forms a bridge to the 50S subunit in the 70S ribosome, contacting the 23S rRNA.

Its function is as follows. One of the primary rRNA binding proteins, it binds directly to 16S rRNA where it helps nucleate assembly of the platform of the 30S subunit by binding and bridging several RNA helices of the 16S rRNA. Functionally, forms an intersubunit bridge (bridge B4) with the 23S rRNA of the 50S subunit in the ribosome. The polypeptide is Small ribosomal subunit protein uS15 (Mesomycoplasma hyopneumoniae (strain 232) (Mycoplasma hyopneumoniae)).